The chain runs to 1049 residues: Vacuolar membrane protease (1049 aa).

Topologically, residues 1-11 are cytoplasmic; the sequence is MKCYNPSAFVP. A helical membrane pass occupies residues 12–32; it reads MAVTLVTVIIYLGVFIPLLII. At 33–438 the chain is on the vacuolar side; sequence QETVPSAPDD…TVFAVFKLRT (406 aa). Asn50 carries an N-linked (GlcNAc...) asparagine glycan. The tract at residues 114–135 is disordered; the sequence is DAEAPESVPSPSNSNDGSAERY. Asn157 is a glycosylation site (N-linked (GlcNAc...) asparagine). The Zn(2+) site is built by His221 and Asp233. The active-site Proton acceptor is the Glu267. 3 residues coordinate Zn(2+): Glu268, Glu293, and His365. The chain crosses the membrane as a helical span at residues 439–459; it reads LFAWSLTLLIAAPLMLFAVSY. At 460 to 495 the chain is on the cytoplasmic side; that stretch reads LLNRQDKFYFFAGSIKAKGPEDEPISLGGWRGAFRY. Residues 496–516 form a helical membrane-spanning segment; sequence PITLIITCAITFGCASLINKI. The Vacuolar portion of the chain corresponds to 517–526; it reads NPMIVYSSPY. Residues 527-547 form a helical membrane-spanning segment; the sequence is SVWSMSASLFFSIFWFIMAGC. The Cytoplasmic portion of the chain corresponds to 548–557; sequence NFVRPSALQR. A helical membrane pass occupies residues 558-578; it reads GYAFMWLFVFGWIILVAATVY. Residues 579 to 585 lie on the Vacuolar side of the membrane; that stretch reads EDRFKIS. The chain crosses the membrane as a helical span at residues 586-606; that stretch reads GGYLFVFYEAAIFLATLIAIG. Residues 607–740 lie on the Cytoplasmic side of the membrane; the sequence is EQFALPKKST…LPIWTWLVQY (134 aa). The disordered stretch occupies residues 621-686; sequence SQLDHDGNQD…IGGGAPTQRS (66 aa). Positions 622–633 are enriched in basic and acidic residues; the sequence is QLDHDGNQDSHH. Over residues 655-664 the composition is skewed to acidic residues; the sequence is GQEEDPEDNV. Residues 741–761 traverse the membrane as a helical segment; the sequence is LLVGPFILIVVGQVGLFLVAA. The Vacuolar portion of the chain corresponds to 762–773; sequence LHQTGTDGSPLL. Residues 774–794 traverse the membrane as a helical segment; it reads LPYLVVAVFSILLLLPVTPFI. The Cytoplasmic portion of the chain corresponds to 795–801; that stretch reads HRLTHHM. The chain crosses the membrane as a helical span at residues 802-822; the sequence is PTFFFLVFIGTLIYNLVAFPF. The Vacuolar portion of the chain corresponds to 823–1049; the sequence is SPNNRYKAYF…LVEGSKRFVV (227 aa). The N-linked (GlcNAc...) asparagine glycan is linked to Asn914.

Belongs to the peptidase M28 family. Requires Zn(2+) as cofactor.

It localises to the vacuole membrane. In terms of biological role, may be involved in vacuolar sorting and osmoregulation. The sequence is that of Vacuolar membrane protease from Botryotinia fuckeliana (strain B05.10) (Noble rot fungus).